Reading from the N-terminus, the 316-residue chain is Probable cell division protein WhiA (316 aa).

Positions 280–313 form a DNA-binding region, H-T-H motif; it reads SLKELGEMLEPPVGKSGVNHRLRKIEKIAEELRT.

Belongs to the WhiA family.

Functionally, involved in cell division and chromosome segregation. This Clostridium perfringens (strain ATCC 13124 / DSM 756 / JCM 1290 / NCIMB 6125 / NCTC 8237 / Type A) protein is Probable cell division protein WhiA.